The chain runs to 358 residues: UDP-N-acetylglucosamine--N-acetylmuramyl-(pentapeptide) pyrophosphoryl-undecaprenol N-acetylglucosamine transferase (358 aa).

UDP-N-acetyl-alpha-D-glucosamine is bound by residues T11–G13, N120, R161, S188, and Q282.

This sequence belongs to the glycosyltransferase 28 family. MurG subfamily.

It localises to the cell inner membrane. It catalyses the reaction di-trans,octa-cis-undecaprenyl diphospho-N-acetyl-alpha-D-muramoyl-L-alanyl-D-glutamyl-meso-2,6-diaminopimeloyl-D-alanyl-D-alanine + UDP-N-acetyl-alpha-D-glucosamine = di-trans,octa-cis-undecaprenyl diphospho-[N-acetyl-alpha-D-glucosaminyl-(1-&gt;4)]-N-acetyl-alpha-D-muramoyl-L-alanyl-D-glutamyl-meso-2,6-diaminopimeloyl-D-alanyl-D-alanine + UDP + H(+). It participates in cell wall biogenesis; peptidoglycan biosynthesis. Its function is as follows. Cell wall formation. Catalyzes the transfer of a GlcNAc subunit on undecaprenyl-pyrophosphoryl-MurNAc-pentapeptide (lipid intermediate I) to form undecaprenyl-pyrophosphoryl-MurNAc-(pentapeptide)GlcNAc (lipid intermediate II). In Parasynechococcus marenigrum (strain WH8102), this protein is UDP-N-acetylglucosamine--N-acetylmuramyl-(pentapeptide) pyrophosphoryl-undecaprenol N-acetylglucosamine transferase.